The chain runs to 159 residues: Ribosomal RNA large subunit methyltransferase H (159 aa).

Residues leucine 76, glycine 108, and 127 to 132 (FSHMTF) contribute to the S-adenosyl-L-methionine site.

This sequence belongs to the RNA methyltransferase RlmH family. As to quaternary structure, homodimer.

The protein resides in the cytoplasm. It carries out the reaction pseudouridine(1915) in 23S rRNA + S-adenosyl-L-methionine = N(3)-methylpseudouridine(1915) in 23S rRNA + S-adenosyl-L-homocysteine + H(+). Its function is as follows. Specifically methylates the pseudouridine at position 1915 (m3Psi1915) in 23S rRNA. This chain is Ribosomal RNA large subunit methyltransferase H, found in Halothermothrix orenii (strain H 168 / OCM 544 / DSM 9562).